Reading from the N-terminus, the 474-residue chain is Hydrogenobyrinate a,c-diamide synthase (474 aa).

The 191-residue stretch at 269 to 459 (VVAVAGGQAF…LHTHWAGCPQ (191 aa)) folds into the GATase cobBQ-type domain. Catalysis depends on Cys352, which acts as the Nucleophile.

Belongs to the CobB/CbiA family. It depends on Mg(2+) as a cofactor.

The enzyme catalyses hydrogenobyrinate + 2 L-glutamine + 2 ATP + 2 H2O = hydrogenobyrinate a,c-diamide + 2 L-glutamate + 2 ADP + 2 phosphate + 2 H(+). Its pathway is cofactor biosynthesis; adenosylcobalamin biosynthesis; cob(II)yrinate a,c-diamide from precorrin-2 (aerobic route): step 9/10. Catalyzes the ATP-dependent amidation of the two carboxylate groups at positions a and c of hydrogenobyrinate, using either L-glutamine or ammonia as the nitrogen source. The sequence is that of Hydrogenobyrinate a,c-diamide synthase from Thermobifida fusca (strain YX).